Here is a 444-residue protein sequence, read N- to C-terminus: L-cysteine:1D-myo-inositol 2-amino-2-deoxy-alpha-D-glucopyranoside ligase (444 aa).

C66 lines the Zn(2+) pocket. L-cysteinyl-5'-AMP is bound by residues 66-69 (CGIT), T81, and 104-106 (NVT). Residues 68–78 (ITPYDATHLGH) carry the 'HIGH' region motif. Residues 206–211 (EHGGDP) carry the 'ERGGDP' region motif. Residue W246 coordinates L-cysteinyl-5'-AMP. Residue C250 participates in Zn(2+) binding. Residue 268–270 (GSD) participates in L-cysteinyl-5'-AMP binding. H275 contributes to the Zn(2+) binding site. V302 is an L-cysteinyl-5'-AMP binding site. The 'KMSKS' region signature appears at 308 to 312 (KMSKS).

Belongs to the class-I aminoacyl-tRNA synthetase family. MshC subfamily. As to quaternary structure, monomer. The cofactor is Zn(2+).

It carries out the reaction 1D-myo-inositol 2-amino-2-deoxy-alpha-D-glucopyranoside + L-cysteine + ATP = 1D-myo-inositol 2-(L-cysteinylamino)-2-deoxy-alpha-D-glucopyranoside + AMP + diphosphate + H(+). Functionally, catalyzes the ATP-dependent condensation of GlcN-Ins and L-cysteine to form L-Cys-GlcN-Ins. The protein is L-cysteine:1D-myo-inositol 2-amino-2-deoxy-alpha-D-glucopyranoside ligase of Parafrankia sp. (strain EAN1pec).